Here is a 366-residue protein sequence, read N- to C-terminus: Alanine racemase (366 aa).

Lys33 functions as the Proton acceptor; specific for D-alanine in the catalytic mechanism. At Lys33 the chain carries N6-(pyridoxal phosphate)lysine. Arg129 is a substrate binding site. Tyr253 functions as the Proton acceptor; specific for L-alanine in the catalytic mechanism. Met301 serves as a coordination point for substrate.

This sequence belongs to the alanine racemase family. It depends on pyridoxal 5'-phosphate as a cofactor.

It catalyses the reaction L-alanine = D-alanine. It participates in amino-acid biosynthesis; D-alanine biosynthesis; D-alanine from L-alanine: step 1/1. Functionally, catalyzes the interconversion of L-alanine and D-alanine. May also act on other amino acids. The sequence is that of Alanine racemase (alr) from Xanthomonas axonopodis pv. citri (strain 306).